Consider the following 640-residue polypeptide: 1-deoxy-D-xylulose-5-phosphate synthase (640 aa).

Thiamine diphosphate contacts are provided by residues His72 and 113–115 (GHA). Asp144 contacts Mg(2+). Thiamine diphosphate is bound by residues 145 to 146 (GA), Asn174, Tyr287, and Glu370. Residue Asn174 participates in Mg(2+) binding.

The protein belongs to the transketolase family. DXPS subfamily. Homodimer. Mg(2+) serves as cofactor. Thiamine diphosphate is required as a cofactor.

It carries out the reaction D-glyceraldehyde 3-phosphate + pyruvate + H(+) = 1-deoxy-D-xylulose 5-phosphate + CO2. Its pathway is metabolic intermediate biosynthesis; 1-deoxy-D-xylulose 5-phosphate biosynthesis; 1-deoxy-D-xylulose 5-phosphate from D-glyceraldehyde 3-phosphate and pyruvate: step 1/1. Catalyzes the acyloin condensation reaction between C atoms 2 and 3 of pyruvate and glyceraldehyde 3-phosphate to yield 1-deoxy-D-xylulose-5-phosphate (DXP). The chain is 1-deoxy-D-xylulose-5-phosphate synthase from Synechococcus sp. (strain RCC307).